Here is a 340-residue protein sequence, read N- to C-terminus: MNNPIPSNLKSEAKKAAKILREFTEITSRNGPDKIIPAHVIAKAKGLAVLSVIKAGFLVTARGGSGIVLARLPDGKWSAPSAIGIAGLGGGFEIGIEVSDLVIILNYDRAVEAFAKGGNLTLGGNFTVAVGPLGRNLEGNVSLRSSAAVFTYCKSRGLFAGISLEGSCLIERKETNRKFYCQDIRAYDILFGDVPQPAQAEDLYEILNSFTEKYETEGQRINLKKVAREQRKAKELPPKPSSRPQPAHPPVQLNAGSQGNRNEYKLYPELSSYHEKTGNLNQPIEVTALYSFEGQQPGDLNFQAGDRIIVISKTDSNFDWWEGKLRGQTGIFPANYVTMN.

A compositionally biased stretch (basic and acidic residues) spans 226-237; that stretch reads VAREQRKAKELP. The disordered stretch occupies residues 226–259; the sequence is VAREQRKAKELPPKPSSRPQPAHPPVQLNAGSQG. Over residues 238 to 249 the composition is skewed to pro residues; the sequence is PKPSSRPQPAHP. The 60-residue stretch at 281–340 folds into the SH3 domain; that stretch reads NQPIEVTALYSFEGQQPGDLNFQAGDRIIVISKTDSNFDWWEGKLRGQTGIFPANYVTMN.

This sequence belongs to the SH3YL1 family. As to quaternary structure, interacts with SH3D19. As to expression, expressed in skin, kidney, stomach, small intestine and colon. Highly expressed in the anagen hair follicle. In hair, it is expressed predominantly in the hair bulb, the hair shaft, inner root sheath, and outer root sheath in the lower half of the follicle.

This is SH3 domain-containing YSC84-like protein 1 (Sh3yl1) from Mus musculus (Mouse).